A 162-amino-acid chain; its full sequence is Probable chemoreceptor glutamine deamidase CheD (162 aa).

This sequence belongs to the CheD family.

It catalyses the reaction L-glutaminyl-[protein] + H2O = L-glutamyl-[protein] + NH4(+). Functionally, probably deamidates glutamine residues to glutamate on methyl-accepting chemotaxis receptors (MCPs), playing an important role in chemotaxis. The chain is Probable chemoreceptor glutamine deamidase CheD from Caldanaerobacter subterraneus subsp. tengcongensis (strain DSM 15242 / JCM 11007 / NBRC 100824 / MB4) (Thermoanaerobacter tengcongensis).